The following is a 1003-amino-acid chain: X-linked retinitis pigmentosa GTPase regulator (1003 aa).

6 RCC1 repeats span residues 54 to 105 (NKLY…STEG), 106 to 158 (GKVY…LTED), 159 to 208 (GELF…VTTE), 209 to 261 (GQLY…LTEK), 262 to 313 (AVYT…ITDM), and 314 to 367 (GLMY…FATP). At S418 the chain carries Phosphoserine. Residues 460–495 (TPEKEGLTQPEPDYFRDNMAKGKETDNSSATDSESL) are disordered. The segment covering 472–485 (DYFRDNMAKGKETD) has biased composition (basic and acidic residues). Polar residues predominate over residues 486–495 (NSSATDSESL). S520 carries the phosphoserine modification. Disordered stretches follow at residues 625–657 (FKAI…LAEM), 691–760 (ESKD…TDQN), 794–932 (LSEI…DVKK), and 968–1003 (AFKG…CTIL). The segment covering 693-715 (KDFVKDSRRNKQDVIFDSERESI) has biased composition (basic and acidic residues). Composition is skewed to acidic residues over residues 716–726 (EEPDSYLEGES) and 797–821 (IPEE…EANE). Over residues 827 to 848 (AGKEEKEIEILSDDLTDRAEDH) the composition is skewed to basic and acidic residues. Acidic residues predominate over residues 849 to 867 (EFSEDEEPEDMAEELDEDL). Over residues 882–896 (SLKKDETTKQEKRAI) the composition is skewed to basic and acidic residues. Over residues 913–924 (SSSSEVLNDSES) the composition is skewed to low complexity. The segment covering 978 to 989 (QNHMGQNHQDTS) has biased composition (polar residues). C1000 carries the post-translational modification Cysteine methyl ester. The S-geranylgeranyl cysteine moiety is linked to residue C1000. Positions 1001–1003 (TIL) are cleaved as a propeptide — removed in mature form.

Interacts with PDE6D. Interacts with RPGRIP1. Interacts with RPGRIP1L. PDE6D, RPGRIP1 and RPGRIP1L may compete for the same binding sites. Interacts with NPM1. Interacts with SMC1A and SMC3. Interacts with CEP290. Interacts with WHRN. Interacts with SPATA7. Interacts with RAB37 and RAB8A (in GDP-bound forms); functions as GEF for RAB37 and RAB8A. In terms of processing, prenylated. Isoform 1 is expressed exclusively in testis. Isoforms 2, 3 and 4 are widely expressed.

It localises to the golgi apparatus. The protein localises to the cell projection. The protein resides in the cilium. It is found in the cytoplasm. Its subcellular location is the cytoskeleton. It localises to the cilium basal body. The protein localises to the microtubule organizing center. The protein resides in the centrosome. It is found in the cilium axoneme. Its subcellular location is the flagellum axoneme. Acts as a guanine-nucleotide releasing factor (GEF) for RAB8A and RAB37 by promoting the conversion of inactive RAB-GDP to the active form RAB-GTP. GEF activity towards RAB8A may facilitate ciliary trafficking by modulating ciliary intracellular localization of RAB8A. GEF activity towards RAB37 maintains autophagic homeostasis and retinal function. Involved in photoreceptor integrity. May control cilia formation by regulating actin stress filaments and cell contractility. May be involved in microtubule organization and regulation of transport in primary cilia. May play a critical role in spermatogenesis and in intraflagellar transport processes. This Canis lupus familiaris (Dog) protein is X-linked retinitis pigmentosa GTPase regulator (RPGR).